We begin with the raw amino-acid sequence, 202 residues long: FMN-dependent NADH:quinone oxidoreductase (202 aa).

Residues Ser-10, 16–18 (SHS), and 96–99 (MYNF) contribute to the FMN site.

This sequence belongs to the azoreductase type 1 family. Homodimer. FMN serves as cofactor.

It catalyses the reaction 2 a quinone + NADH + H(+) = 2 a 1,4-benzosemiquinone + NAD(+). The catalysed reaction is N,N-dimethyl-1,4-phenylenediamine + anthranilate + 2 NAD(+) = 2-(4-dimethylaminophenyl)diazenylbenzoate + 2 NADH + 2 H(+). Its function is as follows. Quinone reductase that provides resistance to thiol-specific stress caused by electrophilic quinones. Functionally, also exhibits azoreductase activity. Catalyzes the reductive cleavage of the azo bond in aromatic azo compounds to the corresponding amines. The protein is FMN-dependent NADH:quinone oxidoreductase of Hydrogenovibrio crunogenus (strain DSM 25203 / XCL-2) (Thiomicrospira crunogena).